Here is a 206-residue protein sequence, read N- to C-terminus: 3-demethoxyubiquinol 3-hydroxylase (206 aa).

Fe cation is bound by residues glutamate 55, glutamate 85, histidine 88, glutamate 137, glutamate 169, and histidine 172.

It belongs to the COQ7 family. It depends on Fe cation as a cofactor.

It is found in the cell membrane. It carries out the reaction a 5-methoxy-2-methyl-3-(all-trans-polyprenyl)benzene-1,4-diol + AH2 + O2 = a 3-demethylubiquinol + A + H2O. Its pathway is cofactor biosynthesis; ubiquinone biosynthesis. In terms of biological role, catalyzes the hydroxylation of 2-nonaprenyl-3-methyl-6-methoxy-1,4-benzoquinol during ubiquinone biosynthesis. The polypeptide is 3-demethoxyubiquinol 3-hydroxylase (Azoarcus sp. (strain BH72)).